A 185-amino-acid polypeptide reads, in one-letter code: Superoxide dismutase [Cu-Zn] (185 aa).

An N-terminal signal peptide occupies residues 1–18 (MTAFYKLCGMSMLSLVLA). The Cu cation site is built by histidine 85, histidine 87, and histidine 102. The cysteines at positions 92 and 180 are disulfide-linked. Histidine 102, histidine 111, histidine 120, and aspartate 123 together coordinate Zn(2+). Residue histidine 158 participates in Cu cation binding.

It belongs to the Cu-Zn superoxide dismutase family. In terms of assembly, homodimer. The cofactor is Cu cation. Zn(2+) is required as a cofactor.

It is found in the periplasm. It carries out the reaction 2 superoxide + 2 H(+) = H2O2 + O2. In terms of biological role, destroys radicals which are normally produced within the cells and which are toxic to biological systems. This is Superoxide dismutase [Cu-Zn] (sodC) from Francisella tularensis subsp. holarctica (strain LVS).